Here is a 441-residue protein sequence, read N- to C-terminus: Homoserine dehydrogenase (441 aa).

Residues Asn17 and Val18 each contribute to the NADP(+) site. NAD(+)-binding residues include Val18 and Gly47. Val18 is an NADPH binding site. 3 residues coordinate NADP(+): Arg49, Arg50, and Lys107. An NADPH-binding site is contributed by Arg49. NADPH is bound at residue Lys107. Na(+)-binding residues include Glu131, Val134, Gly136, and Ile138. NADP(+)-binding residues include Gly189 and Glu192. The L-homoserine site is built by Glu192 and Asp203. The Proton donor role is filled by Lys207. Position 309 (Gly309) interacts with NADP(+). Position 309 (Gly309) interacts with NAD(+). Gly309 contributes to the NADPH binding site. The ACT domain occupies 356–435; sequence YVSMNVADKP…VVQGVTSVLR (80 aa).

Belongs to the homoserine dehydrogenase family. A metal cation serves as cofactor.

It catalyses the reaction L-homoserine + NADP(+) = L-aspartate 4-semialdehyde + NADPH + H(+). The enzyme catalyses L-homoserine + NAD(+) = L-aspartate 4-semialdehyde + NADH + H(+). Its pathway is amino-acid biosynthesis; L-methionine biosynthesis via de novo pathway; L-homoserine from L-aspartate: step 3/3. The protein operates within amino-acid biosynthesis; L-threonine biosynthesis; L-threonine from L-aspartate: step 3/5. Catalyzes the conversion of L-aspartate-beta-semialdehyde (L-Asa) to L-homoserine (L-Hse), the third step in the biosynthesis of threonine and methionine from aspartate. The polypeptide is Homoserine dehydrogenase (hom) (Mycobacterium leprae (strain TN)).